Reading from the N-terminus, the 154-residue chain is Endoribonuclease YbeY (154 aa).

The Zn(2+) site is built by histidine 117, histidine 121, and histidine 127.

The protein belongs to the endoribonuclease YbeY family. Requires Zn(2+) as cofactor.

Its subcellular location is the cytoplasm. Single strand-specific metallo-endoribonuclease involved in late-stage 70S ribosome quality control and in maturation of the 3' terminus of the 16S rRNA. The polypeptide is Endoribonuclease YbeY (Polaromonas sp. (strain JS666 / ATCC BAA-500)).